We begin with the raw amino-acid sequence, 223 residues long: MGIKGMWKDLRTSPVDTLVRWQEQRLLWLLMAVAMGALIILAHSFFQIYLYMAPCEQCVYIRYAMFVMVIGGLVAAINPKNIILKLIGCVMAFYGSILGLKFSLKLNDIHHAVHNPDPDSLFGVQGCSTDPTFPFNLPLAQWAPNWFKPTGDCGYDAPIVPDGVTLSSTQQWFVEMYQQSEGWYLLPPWHFMNMAQACMLAFGMCLVLLVIMSGAWALKIIRG.

Residues 26–46 (LLWLLMAVAMGALIILAHSFF) form a helical membrane-spanning segment. Cys-55 and Cys-58 are disulfide-bonded. Transmembrane regions (helical) follow at residues 59 to 78 (VYIR…AAIN) and 82 to 102 (IILK…GLKF). An intrachain disulfide couples Cys-127 to Cys-153. A helical transmembrane segment spans residues 198-218 (CMLAFGMCLVLLVIMSGAWAL).

Belongs to the DsbB family. DsbI subfamily. Interacts with DsbL.

It is found in the cell inner membrane. In terms of biological role, required for disulfide bond formation in some proteins. Part of a redox system composed of DsbI and DsbL that mediates formation of an essential disulfide bond in AssT. This is Protein-disulfide oxidoreductase DsbI from Escherichia coli O1:K1 / APEC.